We begin with the raw amino-acid sequence, 218 residues long: Large ribosomal subunit protein uL3 (218 aa).

The disordered stretch occupies residues 126-169; it reads HGFSRGPMTHGSKNHRQPGSIGAGTTPGRIYPGKRMSGRYGGKK.

The protein belongs to the universal ribosomal protein uL3 family. As to quaternary structure, part of the 50S ribosomal subunit. Forms a cluster with proteins L14 and L19.

One of the primary rRNA binding proteins, it binds directly near the 3'-end of the 23S rRNA, where it nucleates assembly of the 50S subunit. The polypeptide is Large ribosomal subunit protein uL3 (Synechococcus sp. (strain CC9902)).